Reading from the N-terminus, the 525-residue chain is MALDIHAHRILILDFGSQYTQLIARRVREIGVYCELHPFDMDDEAIREFAPKGVILAGGPESVHEANSPRCPQAVFDLGVPVFGICYGMQTMAEQLGGKVAGSELREFGYARVDVVGKSRLLDGIEDHIDADGLFGLDVWMSHGDKVTKLPEDFHILASTPSCPIAGMADDARGYYGVQFHPEVTHTKQGGRILSRFILDICGCEALWTPSKIAEDAIAQVRAQVGTDNVLLGLSGGVDSSVVAALLHKAIGDQLTCVFVDNGLLRLHEGEQVMAMFAENMGVKVIRANAEEQFLNNLEGESDPEKKRKIIGRTFIDVFDAESCKLDNIKYLAQGTIYPDVIESAGAKSGKAHVIKSHHNVGGLPEEMNLKLVEPLRELFKDEVRRLGLELGLPYDMVYRHPFPGPGLGVRILGEVKKEYADLLRRADHIFIEELRKADWYHKVSQAFVVFQPVKSVGVVGDGRRYAWVVALRAVETIDFMTARWAHLPYELLETVSGRIINEIEGISRVTYDVSSKPPATIEWE.

The region spanning Arg9–Leu207 is the Glutamine amidotransferase type-1 domain. Catalysis depends on Cys86, which acts as the Nucleophile. Active-site residues include His181 and Glu183. The 193-residue stretch at Trp208–Arg400 folds into the GMPS ATP-PPase domain. Residue Ser235–Ser241 coordinates ATP.

Homodimer.

It catalyses the reaction XMP + L-glutamine + ATP + H2O = GMP + L-glutamate + AMP + diphosphate + 2 H(+). The protein operates within purine metabolism; GMP biosynthesis; GMP from XMP (L-Gln route): step 1/1. Functionally, catalyzes the synthesis of GMP from XMP. The protein is GMP synthase [glutamine-hydrolyzing] of Pseudomonas savastanoi pv. phaseolicola (strain 1448A / Race 6) (Pseudomonas syringae pv. phaseolicola (strain 1448A / Race 6)).